The primary structure comprises 419 residues: Gamma-glutamyl phosphate reductase (419 aa).

This sequence belongs to the gamma-glutamyl phosphate reductase family.

Its subcellular location is the cytoplasm. The enzyme catalyses L-glutamate 5-semialdehyde + phosphate + NADP(+) = L-glutamyl 5-phosphate + NADPH + H(+). It participates in amino-acid biosynthesis; L-proline biosynthesis; L-glutamate 5-semialdehyde from L-glutamate: step 2/2. In terms of biological role, catalyzes the NADPH-dependent reduction of L-glutamate 5-phosphate into L-glutamate 5-semialdehyde and phosphate. The product spontaneously undergoes cyclization to form 1-pyrroline-5-carboxylate. The protein is Gamma-glutamyl phosphate reductase of Nitratidesulfovibrio vulgaris (strain DP4) (Desulfovibrio vulgaris).